Reading from the N-terminus, the 509-residue chain is Envelop protein OPG153 (509 aa).

Cys43 and Cys342 form a disulfide bridge. A disordered region spans residues 356–421; that stretch reads GHYQDSKINI…KLLPVEEPDP (66 aa). Residues 366–385 show a composition bias toward acidic residues; that stretch reads EDDDIIDDDDDDDDDDDDDD. The segment covering 389 to 401 has biased composition (pro residues); that stretch reads KPTPIPDPHPRPP.

Belongs to the orthopoxvirus OPG153 protein family. Interacts with proteins OPG094 and OPG143. Interacts with OPG154. Interacts with OPG152. Interacts with host laminin.

The protein localises to the virion membrane. Functionally, envelop protein that mediates acid-dependent endocytosis into host cells. Plays an important role in endocytic entry of the virus by acting as an acid-sensitive membrane fusion suppressor. Low pH in host endosomes triggers conformational changes to allow de-repression of viral fusion complex activity and membrane fusion within vesicles. Also plays a role in bridging the mature virion with structural protein OPG152. This chain is Envelop protein OPG153 (OPG153), found in Monkeypox virus.